We begin with the raw amino-acid sequence, 314 residues long: tRNA dimethylallyltransferase (314 aa).

9–16 (GPTAVGKT) serves as a coordination point for ATP. 11-16 (TAVGKT) is a binding site for substrate. The interaction with substrate tRNA stretch occupies residues 34-37 (DSVQ).

Belongs to the IPP transferase family. In terms of assembly, monomer. Mg(2+) is required as a cofactor.

The enzyme catalyses adenosine(37) in tRNA + dimethylallyl diphosphate = N(6)-dimethylallyladenosine(37) in tRNA + diphosphate. Its function is as follows. Catalyzes the transfer of a dimethylallyl group onto the adenine at position 37 in tRNAs that read codons beginning with uridine, leading to the formation of N6-(dimethylallyl)adenosine (i(6)A). The sequence is that of tRNA dimethylallyltransferase from Desulfitobacterium hafniense (strain Y51).